The primary structure comprises 469 residues: Bile acid receptor (469 aa).

Residue K119 forms a Glycyl lysine isopeptide (Lys-Gly) (interchain with G-Cter in SUMO1) linkage. Residues 121–196 constitute a DNA-binding region (nuclear receptor); the sequence is DELCVVCGDR…MGMLAECLLT (76 aa). The segment at 124-144 adopts an NR C4-type zinc-finger fold; that stretch reads CVVCGDRASGYHYNALTCEGC. Phosphoserine; by PKC/PRKCA occurs at positions 132 and 151. K154 carries the post-translational modification N6-acetyllysine; by EP300. An NR C4-type zinc finger spans residues 160–184; sequence CKNGGNCVMDMYMRRKCQDCRLRKC. At K203 the chain carries N6-methyllysine; by SETD7. Residue K210 is modified to N6-acetyllysine; by EP300. The NR LBD domain occupies 245–469; sequence DQQTLLDYIM…PLLCEIWDVQ (225 aa). A Glycyl lysine isopeptide (Lys-Gly) (interchain with G-Cter in SUMO1) cross-link involves residue K272. A 3beta,7beta-dihydroxy-5beta-cholan-24-oate-binding site is contributed by R328. Residues R328, Y358, and Y366 each coordinate chenodeoxycholate. Y366 is a 3beta,7beta-dihydroxy-5beta-cholan-24-oate binding site. Residue T439 is modified to Phosphothreonine; by PKC/PRKCZ. Chenodeoxycholate is bound at residue H444.

It belongs to the nuclear hormone receptor family. NR1 subfamily. As to quaternary structure, heterodimer with RXRA; the heterodimerization enhances the binding affinity for LXXLL motifs from coactivators. Binds DNA predominantly as a heterodimer with RXRA. After activation by agonist binding interacts with coactivators. Interacts with NCOA1, NCOA2, PPARGC1A, CARM1, SETD7, PRMT1, GPS2, SMARCA4 and MED1, EP300 and SMARCD1. Interacts with XRCC5 and XRCC6; decreasing NR1H4/FXR transactivation activity towards ABCB11/BSEP. Interacts with PAGR1 AND NCOA6; indicative for an association with an MLL2/MLL3 complex (ASCOM). Acetylated by EP300. Lys-210 as is the major acetylation site for EP300; the dynamicly regulated acetylation inhibits heterodimerization with RXRA and transactivation activity. Deacetylated by SIRT1. Post-translationally, methylation may increase transactivation of target genes. In terms of processing, phosphorylation by PKC/PRKCA increases transactivation activity by promoting association with PPARGC1A. Sumoylated upon ligand binding.

It is found in the nucleus. Its function is as follows. Ligand-activated transcription factor. Receptor for bile acids (BAs) such as chenodeoxycholic acid (CDCA), lithocholic acid, deoxycholic acid (DCA) and allocholic acid (ACA). Plays a essential role in BA homeostasis through the regulation of genes involved in BA synthesis, conjugation and enterohepatic circulation. Also regulates lipid and glucose homeostasis and is involved innate immune response. The FXR-RXR heterodimer binds predominantly to farnesoid X receptor response elements (FXREs) containing two inverted repeats of the consensus sequence 5'-AGGTCA-3' in which the monomers are spaced by 1 nucleotide (IR-1) but also to tandem repeat DR1 sites with lower affinity, and can be activated by either FXR or RXR-specific ligands. It is proposed that monomeric nuclear receptors such as NR5A2/LRH-1 bound to coregulatory nuclear responsive element (NRE) halfsites located in close proximity to FXREs modulate transcriptional activity. In the liver activates transcription of the corepressor NR0B2 thereby indirectly inhibiting CYP7A1 and CYP8B1 (involved in BA synthesis) implicating at least in part histone demethylase KDM1A resulting in epigenomic repression, and SLC10A1/NTCP (involved in hepatic uptake of conjugated BAs). Activates transcription of the repressor MAFG (involved in regulation of BA synthesis). Activates transcription of SLC27A5/BACS and BAAT (involved in BA conjugation), ABCB11/BSEP (involved in bile salt export) by directly recruiting histone methyltransferase CARM1, and ABCC2/MRP2 (involved in secretion of conjugated BAs) and ABCB4 (involved in secretion of phosphatidylcholine in the small intestine). Activates transcription of SLC27A5/BACS and BAAT (involved in BA conjugation), ABCB11/BSEP (involved in bile salt export) by directly recruiting histone methyltransferase CARM1, and ABCC2/MRP2 (involved in secretion of conjugated BAs) and ABCB4 (involved in secretion of phosphatidylcholine in the small intestine). In the intestine activates FGF19 expression and secretion leading to hepatic CYP7A1 repression. The function also involves the coordinated induction of hepatic KLB/beta-klotho expression. Regulates transcription of liver UGT2B4 and SULT2A1 involved in BA detoxification; binding to the UGT2B4 promoter seems to imply a monomeric transactivation independent of RXRA. Modulates lipid homeostasis by activating liver NR0B2/SHP-mediated repression of SREBF1 (involved in de novo lipogenesis), expression of PLTP (involved in HDL formation), SCARB1 (involved in HDL hepatic uptake), APOE, APOC1, APOC4, PPARA (involved in beta-oxidation of fatty acids), VLDLR and SDC1 (involved in the hepatic uptake of LDL and IDL remnants), and inhibiting expression of MTTP (involved in VLDL assembly). Increases expression of APOC2 (promoting lipoprotein lipase activity implicated in triglyceride clearance). Transrepresses APOA1 involving a monomeric competition with NR2A1 for binding to a DR1 element. Also reduces triglyceride clearance by inhibiting expression of ANGPTL3 and APOC3 (both involved in inhibition of lipoprotein lipase). Involved in glucose homeostasis by modulating hepatic gluconeogenesis through activation of NR0B2/SHP-mediated repression of respective genes. Modulates glycogen synthesis (inducing phosphorylation of glycogen synthase kinase-3). Modulates glucose-stimulated insulin secretion and is involved in insulin resistance. Involved in intestinal innate immunity. Plays a role in protecting the distal small intestine against bacterial overgrowth and preservation of the epithelial barrier. Down-regulates inflammatory cytokine expression in several types of immune cells including macrophages and mononuclear cells. Mediates trans-repression of TLR4-induced cytokine expression; the function seems to require its sumoylation and prevents N-CoR nuclear receptor corepressor clearance from target genes such as IL1B and NOS2. Involved in the TLR9-mediated protective mechanism in intestinal inflammation. Plays an anti-inflammatory role in liver inflammation; proposed to inhibit pro-inflammatory (but not antiapoptotic) NF-kappa-B signaling. In Rattus norvegicus (Rat), this protein is Bile acid receptor (Nr1h4).